Consider the following 92-residue polypeptide: Small ribosomal subunit protein uS19 (92 aa).

Belongs to the universal ribosomal protein uS19 family.

Its function is as follows. Protein S19 forms a complex with S13 that binds strongly to the 16S ribosomal RNA. The chain is Small ribosomal subunit protein uS19 from Photobacterium profundum (strain SS9).